The primary structure comprises 301 residues: Mas-related G-protein coupled receptor member A6 (301 aa).

At 1 to 15 (MHRSISIRILITNLM) the chain is on the extracellular side. Residues 16–36 (IVILGLVGLTGNAIVFWLLLF) form a helical membrane-spanning segment. Topologically, residues 37–42 (RLRRNA) are cytoplasmic. The helical transmembrane segment at 43-63 (FSIYILNLALADFLFLLCHII) threads the bilayer. Over 64–77 (ASTEHILTFSSPNS) the chain is Extracellular. Residues 78 to 98 (IFINCLYTFRVLLYIAGLNML) form a helical membrane-spanning segment. At 99–128 (SAISIERCLSVMCPIWYRCHRPEHTSTVMC) the chain is on the cytoplasmic side. Residues 129-149 (AMIWVLSLLLCILYRYFCGFL) form a helical membrane-spanning segment. At 150–163 (DTKYEDDYGCLAMN) the chain is on the extracellular side. A helical membrane pass occupies residues 164–184 (FLTTAYLMFLFVVLCVSSLAL). Over 185–203 (LARLFCGAGRMKLTRLYVT) the chain is Cytoplasmic. A helical transmembrane segment spans residues 204–224 (ITLTLLVFLLCGLPCGFYWFL). At 225 to 240 (LSKIKNVFSVFEFSLY) the chain is on the extracellular side. A helical transmembrane segment spans residues 241-261 (LTSVVLTAINSCANPIIYFFV). Residues 262–301 (GSFRHRLKHQTLKMVLQSALQDTPETPENMVEMSRNKAEL) lie on the Cytoplasmic side of the membrane.

This sequence belongs to the G-protein coupled receptor 1 family. Mas subfamily. In terms of tissue distribution, expressed in a subset of sensory neurons that includes nociceptors. Expressed in the subclass of non-peptidergic sensory neurons that are IB4(+) and VR1(-).

It localises to the cell membrane. In terms of biological role, orphan receptor. May be a receptor for RFamide-family neuropeptides such as NPFF and NPAF, which are analgesic in vivo. May regulate nociceptor function and/or development, including the sensation or modulation of pain. In Mus musculus (Mouse), this protein is Mas-related G-protein coupled receptor member A6 (Mrgpra6).